Reading from the N-terminus, the 118-residue chain is Protein Rev (118 aa).

A Phosphoserine; by host CK2 modification is found at Ser5. Positions 18–26 (LIKILYQSN) are homomultimerization. A disordered region spans residues 23 to 49 (YQSNPPPSPEGTRQARRNRRRRWRARQ). Positions 34–50 (TRQARRNRRRRWRARQR) match the Nuclear localization signal and RNA-binding (RRE) motif. Residues 36–49 (QARRNRRRRWRARQ) show a composition bias toward basic residues. A Nuclear export signal and binding to XPO1 motif is present at residues 73–84 (LQLPPLERLNLN). The interval 89–118 (CGASGTQGVGSPQISVESPTVLESGTEEQC) is disordered. Phosphoserine; by host occurs at positions 92 and 99. The segment covering 92–112 (SGTQGVGSPQISVESPTVLES) has biased composition (polar residues).

It belongs to the HIV-1 REV protein family. As to quaternary structure, homomultimer; when bound to the RRE. Multimeric assembly is essential for activity and may involve XPO1. Binds to human KPNB1, XPO1, TNPO1, RANBP5 and IPO7. Interacts with the viral Integrase. Interacts with human KHDRBS1. Interacts with human NAP1; this interaction decreases Rev multimerization and stimulates its activity. Interacts with human DEAD-box helicases DDX3 and DDX24; these interactions may serve for viral RNA export to the cytoplasm and packaging, respectively. Interacts with human PSIP1; this interaction may inhibit HIV-1 DNA integration by promoting dissociation of the Integrase-LEDGF/p75 complex. Asymmetrically arginine dimethylated at one site by host PRMT6. Methylation impairs the RNA-binding activity and export of viral RNA from the nucleus to the cytoplasm. In terms of processing, phosphorylated by protein kinase CK2. Presence of, and maybe binding to the N-terminus of the regulatory beta subunit of CK2 is necessary for CK2-mediated Rev's phosphorylation.

The protein localises to the host nucleus. The protein resides in the host nucleolus. It is found in the host cytoplasm. Escorts unspliced or incompletely spliced viral pre-mRNAs (late transcripts) out of the nucleus of infected cells. These pre-mRNAs carry a recognition sequence called Rev responsive element (RRE) located in the env gene, that is not present in fully spliced viral mRNAs (early transcripts). This function is essential since most viral proteins are translated from unspliced or partially spliced pre-mRNAs which cannot exit the nucleus by the pathway used by fully processed cellular mRNAs. Rev itself is translated from a fully spliced mRNA that readily exits the nucleus. Rev's nuclear localization signal (NLS) binds directly to KPNB1/Importin beta-1 without previous binding to KPNA1/Importin alpha-1. KPNB1 binds to the GDP bound form of RAN (Ran-GDP) and targets Rev to the nucleus. In the nucleus, the conversion from Ran-GDP to Ran-GTP dissociates Rev from KPNB1 and allows Rev's binding to the RRE in viral pre-mRNAs. Rev multimerization on the RRE via cooperative assembly exposes its nuclear export signal (NES) to the surface. Rev can then form a complex with XPO1/CRM1 and Ran-GTP, leading to nuclear export of the complex. Conversion from Ran-GTP to Ran-GDP mediates dissociation of the Rev/RRE/XPO1/RAN complex, so that Rev can return to the nucleus for a subsequent round of export. Beside KPNB1, also seems to interact with TNPO1/Transportin-1, RANBP5/IPO5 and IPO7/RANBP7 for nuclear import. The nucleoporin-like HRB/RIP is an essential cofactor that probably indirectly interacts with Rev to release HIV RNAs from the perinuclear region to the cytoplasm. The protein is Protein Rev of Human immunodeficiency virus type 1 group M subtype D (isolate Z2/CDC-Z34) (HIV-1).